Consider the following 906-residue polypeptide: Coatomer subunit beta' (906 aa).

8 WD repeats span residues 13 to 52 (ARSD…LVKT), 55 to 94 (VCDL…RVHM), 97 to 136 (AHSD…SCSQ), 140 to 180 (GHTH…PNFT), 183 to 224 (GHEK…CVQT), 227 to 266 (GHAQ…LEST), 350 to 388 (SCEI…NKSF), and 390 to 425 (SAQE…KSFK). K627 bears the N6-acetyllysine mark. One copy of the WD 9 repeat lies at 746-783 (IRTGRLPEAAFLARTYLPSQVSRVVKLWRENLSKVNQK). The interval 837-863 (EEAKGFQPSRSTAQQELDGKPASPTPV) is disordered. At S859 the chain carries Phosphoserine. T861 bears the Phosphothreonine mark. Positions 866–890 (ASHTANKEEKSLLELEVDLDNLELV) form a coiled coil.

It belongs to the WD repeat COPB2 family. As to quaternary structure, oligomeric complex that consists of at least the alpha, beta, beta', gamma, delta, epsilon and zeta subunits. Probably interacts with PEX11A. Interacts with SCYL1. Interacts with JAGN1.

It localises to the cytoplasm. The protein localises to the cytosol. The protein resides in the golgi apparatus membrane. It is found in the cytoplasmic vesicle. Its subcellular location is the COPI-coated vesicle membrane. Its function is as follows. The coatomer is a cytosolic protein complex that binds to dilysine motifs and reversibly associates with Golgi non-clathrin-coated vesicles, which further mediate biosynthetic protein transport from the ER, via the Golgi up to the trans Golgi network. Coatomer complex is required for budding from Golgi membranes, and is essential for the retrograde Golgi-to-ER transport of dilysine-tagged proteins. In mammals, the coatomer can only be recruited by membranes associated to ADP-ribosylation factors (ARFs), which are small GTP-binding proteins; the complex also influences the Golgi structural integrity, as well as the processing, activity, and endocytic recycling of LDL receptors. This coatomer complex protein, essential for Golgi budding and vesicular trafficking, is a selective binding protein (RACK) for protein kinase C, epsilon type. It binds to Golgi membranes in a GTP-dependent manner. The chain is Coatomer subunit beta' (COPB2) from Pongo abelii (Sumatran orangutan).